Consider the following 503-residue polypeptide: Lysine--tRNA ligase (503 aa).

The 'HIGH' region signature appears at 23–31; it reads PSGPIHVGN. A 'KMSKS' region motif is present at residues 267–271; it reads AMHSS.

Belongs to the class-I aminoacyl-tRNA synthetase family.

The protein localises to the cytoplasm. It catalyses the reaction tRNA(Lys) + L-lysine + ATP = L-lysyl-tRNA(Lys) + AMP + diphosphate. The chain is Lysine--tRNA ligase from Thermoplasma volcanium (strain ATCC 51530 / DSM 4299 / JCM 9571 / NBRC 15438 / GSS1).